Here is a 236-residue protein sequence, read N- to C-terminus: MTPRLFALIPCAGTGSRSGSAVPKQYRTLAGRALLHYTLAAFDACSEFAQTLVVLAPDDTHFDARRFAGLRFAVRRCGGASRQASVLNGLLGLAEFGAADHDWVLVHDAARPGITPELIRTLVATLKDDPVGGIVALPVADTLKRVPAGGDAIARTEPRDALWQAQTPQMFRIGMLRDAIQRAQREGHDLTDEASAIEWSGHTPRVVQGSLRNFKVTYPEDFALAEAILARAANAS.

The protein belongs to the IspD/TarI cytidylyltransferase family. IspD subfamily.

It catalyses the reaction 2-C-methyl-D-erythritol 4-phosphate + CTP + H(+) = 4-CDP-2-C-methyl-D-erythritol + diphosphate. Its pathway is isoprenoid biosynthesis; isopentenyl diphosphate biosynthesis via DXP pathway; isopentenyl diphosphate from 1-deoxy-D-xylulose 5-phosphate: step 2/6. Catalyzes the formation of 4-diphosphocytidyl-2-C-methyl-D-erythritol from CTP and 2-C-methyl-D-erythritol 4-phosphate (MEP). The polypeptide is 2-C-methyl-D-erythritol 4-phosphate cytidylyltransferase (Burkholderia multivorans (strain ATCC 17616 / 249)).